The primary structure comprises 74 residues: Small ribosomal subunit protein bS18 (74 aa).

It belongs to the bacterial ribosomal protein bS18 family. In terms of assembly, part of the 30S ribosomal subunit. Forms a tight heterodimer with protein bS6.

Binds as a heterodimer with protein bS6 to the central domain of the 16S rRNA, where it helps stabilize the platform of the 30S subunit. This is Small ribosomal subunit protein bS18 from Gloeobacter violaceus (strain ATCC 29082 / PCC 7421).